Here is a 236-residue protein sequence, read N- to C-terminus: Small ribosomal subunit protein uS3 (236 aa).

A KH type-2 domain is found at 39–107 (VREFLKKSLS…PAQISITEIK (69 aa)).

This sequence belongs to the universal ribosomal protein uS3 family. In terms of assembly, part of the 30S ribosomal subunit. Forms a tight complex with proteins S10 and S14.

Binds the lower part of the 30S subunit head. Binds mRNA in the 70S ribosome, positioning it for translation. This chain is Small ribosomal subunit protein uS3, found in Wigglesworthia glossinidia brevipalpis.